The primary structure comprises 507 residues: ATP synthase subunit alpha, chloroplastic (507 aa).

170 to 177 (GDRQTGKT) contributes to the ATP binding site.

The protein belongs to the ATPase alpha/beta chains family. In terms of assembly, F-type ATPases have 2 components, CF(1) - the catalytic core - and CF(0) - the membrane proton channel. CF(1) has five subunits: alpha(3), beta(3), gamma(1), delta(1), epsilon(1). CF(0) has four main subunits: a, b, b' and c.

The protein localises to the plastid. Its subcellular location is the chloroplast thylakoid membrane. It carries out the reaction ATP + H2O + 4 H(+)(in) = ADP + phosphate + 5 H(+)(out). Functionally, produces ATP from ADP in the presence of a proton gradient across the membrane. The alpha chain is a regulatory subunit. The sequence is that of ATP synthase subunit alpha, chloroplastic from Piper cenocladum (Ant piper).